Here is a 325-residue protein sequence, read N- to C-terminus: GMP reductase (325 aa).

Catalysis depends on Cys-174, which acts as the Thioimidate intermediate. Residue 203–226 participates in NADP(+) binding; sequence LIADGGIRTHGDIAKSIRFGATMV.

The protein belongs to the IMPDH/GMPR family. GuaC type 2 subfamily.

It catalyses the reaction IMP + NH4(+) + NADP(+) = GMP + NADPH + 2 H(+). Functionally, catalyzes the irreversible NADPH-dependent deamination of GMP to IMP. It functions in the conversion of nucleobase, nucleoside and nucleotide derivatives of G to A nucleotides, and in maintaining the intracellular balance of A and G nucleotides. This is GMP reductase from Pediococcus pentosaceus (strain ATCC 25745 / CCUG 21536 / LMG 10740 / 183-1w).